The sequence spans 543 residues: Ribosomal protein arginine N-methyltransferase rmt3 (543 aa).

The segment at 58-81 (FCCLFCDSTFTCLKDLWSHCKEAH) adopts a C2H2-type zinc-finger fold. The SAM-dependent MTase PRMT-type domain occupies 217-543 (DSYYFESYAG…KADSQSYVLN (327 aa)). The S-adenosyl-L-homocysteine site is built by arginine 239, glycine 263, aspartate 285, serine 287, isoleucine 313, and glutamate 314. Catalysis depends on residues glutamate 329 and glutamate 338.

Belongs to the class I-like SAM-binding methyltransferase superfamily. Protein arginine N-methyltransferase family. Interacts with ef1a-c, rps2 and rps24. Note=Associates with the 40S ribosomal particle.

The protein resides in the cytoplasm. It localises to the cytosol. The catalysed reaction is L-arginyl-[protein] + S-adenosyl-L-methionine = N(omega)-methyl-L-arginyl-[protein] + S-adenosyl-L-homocysteine + H(+). It catalyses the reaction L-arginyl-[protein] + 2 S-adenosyl-L-methionine = N(omega),N(omega)-dimethyl-L-arginyl-[protein] + 2 S-adenosyl-L-homocysteine + 2 H(+). In terms of biological role, methylates (mono and asymmetric dimethylation) the guanidino nitrogens of arginyl residues in ribosomal protein rps2. The polypeptide is Ribosomal protein arginine N-methyltransferase rmt3 (rmt3) (Schizosaccharomyces pombe (strain 972 / ATCC 24843) (Fission yeast)).